The chain runs to 327 residues: Transcription factor bHLH71 (327 aa).

Disordered regions lie at residues 46 to 88 (ISEI…NQRM) and 151 to 176 (AKLNQSVTSSTSQDSNGEQENPHQPS). Residues 65–76 (RGKKRRRRKPRV) are compositionally biased toward basic residues. Basic and acidic residues predominate over residues 77-88 (CKNEEEAENQRM). In terms of domain architecture, bHLH spans 85 to 136 (NQRMTHIAVERNRRRQMNQHLSVLRSLMPQPFAHKGDQASIVGGAIDFIKEL). Residues 152–169 (KLNQSVTSSTSQDSNGEQ) show a composition bias toward polar residues.

Homodimer. Interacts with FAMA. As to expression, expressed in leaves, stems, and flowers.

The protein resides in the nucleus. Functionally, transcription factor. May be involved in the differentiation of stomatal guard cells. The chain is Transcription factor bHLH71 (BHLH71) from Arabidopsis thaliana (Mouse-ear cress).